The sequence spans 1662 residues: Cortactin-binding protein 2 (1662 aa).

Disordered stretches follow at residues 1–23, 203–222, 361–440, 454–479, and 498–618; these read MATDGASCEPDLSRAPEDAAGAA, KKKTNELEEELSAEKRRSTE, SHSD…LHPG, GNANDPDQNGNTTQSPPSRDMSPTSR, and RFTS…PSID. Residues 119 to 276 adopt a coiled-coil conformation; sequence KKMQERMSAQ…EQLKRGSDSK (158 aa). Over residues 386 to 396 the composition is skewed to low complexity; sequence PSTDSTPDPTS. Polar residues predominate over residues 411–422; it reads QTPGIAPQNSQA. Arg498 carries the asymmetric dimethylarginine modification. Residues 583 to 597 show a composition bias toward polar residues; the sequence is TVASPPSSLPQGNRV. ANK repeat units follow at residues 709-739, 743-772, 776-805, 809-838, 842-871, and 912-942; these read GRPTLLQQAAAQGNVTLLSMLLNEEGLDINY, DGHSALYSAAKNGHTDCVRLLLSAEAQINA, NGFTPLCAAAAQGHFECVELLIAYDANINH, GGQTPLYLACKNENKECIKLLLEAGTNRSV, DGWTPVHAAVDTGNVDSLKLLMYHRIPACG, and EGWTAAHIAASKGFKNCLEILCRHGGLEPER. The tract at residues 1450-1474 is disordered; the sequence is GESGAWRKVNTSPRRKSGRFSLPTW. Ser1524 is modified (phosphoserine). 2 disordered regions span residues 1580–1602 and 1618–1662; these read SQKEVSPLSSHQTTECSNSKSKT and SKVT…KPNK. Residues 1582–1599 show a composition bias toward polar residues; it reads KEVSPLSSHQTTECSNSK. A compositionally biased stretch (low complexity) spans 1624 to 1638; the sequence is SQNTKRSSSSSNTRQ. Residues 1639–1648 show a composition bias toward polar residues; that stretch reads IEINNNSKEN. Residues 1649-1662 show a composition bias toward basic and acidic residues; that stretch reads WNLHKNEHLDKPNK.

As to quaternary structure, interacts with CTTN/cortactin SH3 domain. Interacts with STRN, STRN4/zinedin and MOB4/phocein; this interactions mediate the association with the STRIPAK core complex and may regulate dendritic spine distribution of the STRIPAK complex in hippocampal neurons. Activation of glutamate receptors weakens the interaction with STRN and STRN4.

The protein localises to the cytoplasm. The protein resides in the cell cortex. It is found in the cell projection. It localises to the dendritic spine. Regulates the dendritic spine distribution of CTTN/cortactin in hippocampal neurons, and thus controls dendritic spinogenesis and dendritic spine maintenance. Associates with the striatin-interacting phosphatase and kinase (STRIPAK) core complex to regulate dendritic spine distribution of the STRIPAK complex in hippocampal neurons. In Chlorocebus aethiops (Green monkey), this protein is Cortactin-binding protein 2 (CTTNBP2).